The chain runs to 408 residues: Protein CNPPD1 (408 aa).

The helical transmembrane segment at 233–253 (CLLAVAYVSSVALAVASMAVI) threads the bilayer.

It belongs to the CNPPD1 family.

It is found in the membrane. This chain is Protein CNPPD1 (Cnppd1), found in Rattus norvegicus (Rat).